The following is an 88-amino-acid chain: UPF0298 protein BA_4142/GBAA_4142/BAS3844 (88 aa).

Belongs to the UPF0298 family.

The protein resides in the cytoplasm. The protein is UPF0298 protein BA_4142/GBAA_4142/BAS3844 of Bacillus anthracis.